The primary structure comprises 511 residues: ATP synthase subunit alpha (511 aa).

Residue 170-177 participates in ATP binding; sequence GDRQTGKT.

Belongs to the ATPase alpha/beta chains family. F-type ATPases have 2 components, CF(1) - the catalytic core - and CF(0) - the membrane proton channel. CF(1) has five subunits: alpha(3), beta(3), gamma(1), delta(1), epsilon(1). CF(0) has three main subunits: a(1), b(2) and c(9-12). The alpha and beta chains form an alternating ring which encloses part of the gamma chain. CF(1) is attached to CF(0) by a central stalk formed by the gamma and epsilon chains, while a peripheral stalk is formed by the delta and b chains.

It localises to the cell inner membrane. It catalyses the reaction ATP + H2O + 4 H(+)(in) = ADP + phosphate + 5 H(+)(out). Its function is as follows. Produces ATP from ADP in the presence of a proton gradient across the membrane. The alpha chain is a regulatory subunit. In Pelagibacter ubique (strain HTCC1062), this protein is ATP synthase subunit alpha.